The primary structure comprises 756 residues: Putative DNA ligase 052L (756 aa).

The N6-AMP-lysine intermediate role is filled by lysine 103. Low complexity predominate over residues 610 to 620 (PSAAGSASPCR). The interval 610–630 (PSAAGSASPCRPTKRRDDWFD) is disordered. The region spanning 648-742 (KKRPPMQGYV…LKRQRKCRAR (95 aa)) is the BRCT domain.

It belongs to the NAD-dependent DNA ligase family.

It carries out the reaction NAD(+) + (deoxyribonucleotide)n-3'-hydroxyl + 5'-phospho-(deoxyribonucleotide)m = (deoxyribonucleotide)n+m + AMP + beta-nicotinamide D-nucleotide.. Catalyzes the formation of phosphodiester linkages between 5'-phosphoryl and 3'-hydroxyl groups in double-stranded DNA using NAD as a coenzyme and as the energy source for the reaction. The sequence is that of Putative DNA ligase 052L from Invertebrate iridescent virus 3 (IIV-3).